The chain runs to 417 residues: Serine hydroxymethyltransferase (417 aa).

(6S)-5,6,7,8-tetrahydrofolate is bound by residues L121 and 125–127; that span reads GHL. At K229 the chain carries N6-(pyridoxal phosphate)lysine. Residue 355–357 coordinates (6S)-5,6,7,8-tetrahydrofolate; the sequence is SPF.

The protein belongs to the SHMT family. As to quaternary structure, homodimer. It depends on pyridoxal 5'-phosphate as a cofactor.

The protein resides in the cytoplasm. It carries out the reaction (6R)-5,10-methylene-5,6,7,8-tetrahydrofolate + glycine + H2O = (6S)-5,6,7,8-tetrahydrofolate + L-serine. Its pathway is one-carbon metabolism; tetrahydrofolate interconversion. The protein operates within amino-acid biosynthesis; glycine biosynthesis; glycine from L-serine: step 1/1. Its function is as follows. Catalyzes the reversible interconversion of serine and glycine with tetrahydrofolate (THF) serving as the one-carbon carrier. This reaction serves as the major source of one-carbon groups required for the biosynthesis of purines, thymidylate, methionine, and other important biomolecules. Also exhibits THF-independent aldolase activity toward beta-hydroxyamino acids, producing glycine and aldehydes, via a retro-aldol mechanism. The sequence is that of Serine hydroxymethyltransferase from Shewanella denitrificans (strain OS217 / ATCC BAA-1090 / DSM 15013).